We begin with the raw amino-acid sequence, 142 residues long: Galactose-6-phosphate isomerase subunit LacA (142 aa).

The protein belongs to the LacAB/RpiB family. As to quaternary structure, heteromultimeric protein consisting of LacA and LacB.

It catalyses the reaction aldehydo-D-galactose 6-phosphate = keto-D-tagatose 6-phosphate. The protein operates within carbohydrate metabolism; D-galactose 6-phosphate degradation; D-tagatose 6-phosphate from D-galactose 6-phosphate: step 1/1. This chain is Galactose-6-phosphate isomerase subunit LacA, found in Staphylococcus aureus.